Reading from the N-terminus, the 136-residue chain is Large-conductance mechanosensitive channel (136 aa).

2 helical membrane passes run 10 to 30 and 76 to 96; these read FAMR…AAFG and GSFI…FSAV.

The protein belongs to the MscL family. As to quaternary structure, homopentamer.

Its subcellular location is the cell inner membrane. Functionally, channel that opens in response to stretch forces in the membrane lipid bilayer. May participate in the regulation of osmotic pressure changes within the cell. The protein is Large-conductance mechanosensitive channel of Yersinia enterocolitica serotype O:8 / biotype 1B (strain NCTC 13174 / 8081).